The following is a 753-amino-acid chain: Striatin-4 (753 aa).

The disordered stretch occupies residues 10–65 (VAAAASSCRPLGSGAGPGPTGAAPVSAPAPGPGPAGKGGGGGGSPGPTAGPEPLSL). Positions 43 to 54 (PAGKGGGGGGSP) are enriched in gly residues. Ser53 is modified (phosphoserine). The stretch at 69–136 (LHFIQHEWAR…QERAKYHKLK (68 aa)) forms a coiled coil. The segment at 71–79 (FIQHEWARF) is caveolin-binding. A calmodulin-binding region spans residues 165–182 (ENSPLVWKEGRQLLRQYL). The residue at position 206 (Ser206) is a Phosphoserine. Disordered stretches follow at residues 213 to 232 (VEPSEGAPRAPPGPAGLSGG), 271 to 345 (CEDE…SPHE), and 363 to 382 (VDGLPPKVTGPPPGTPQPRP). 2 stretches are compositionally biased toward acidic residues: residues 271-283 (CEDEDSDEDDELD) and 302-317 (EMEDEDEEDDSEDAIN). Ser276 carries the post-translational modification Phosphoserine. Residues 332–345 (PDPRRCTVDGSPHE) show a composition bias toward basic and acidic residues. Pro residues predominate over residues 370 to 380 (VTGPPPGTPQP). WD repeat units lie at residues 436-475 (SHYDGIRSLAFHHSQSALLTASEDGTLKLWNLQKAVTAKK), 489-528 (AHRGPVLAVAMGSNSEYCYSGGADACIHSWKIPDLSMDPY), 542-581 (GHGDAVWGLAFSPTSQRLASCSADGTVRIWDPSSSSPACL), 587-628 (ASEH…ALLT), 635-674 (SGPTQINQVVSHPNQPLTITAHDDRGIRFLDNRTGKPVHS), 677-716 (AHLDAVTCLAVDPNGAFLMSGSHDCSLRLWSLDNKTCVQE), and 723-753 (KHEEAIHAVACHPSKALIASAGADALAKVFV).

It belongs to the WD repeat striatin family. As to quaternary structure, part of the core of STRIPAK complexes composed of PP2A catalytic and scaffolding subunits, the striatins (PP2A regulatory subunits), the striatin-associated proteins MOB4, STRIP1 and STRIP2, PDCD10 and members of the STE20 kinases, such as STK24 and STK26. Interacts with CTTNBP2NL.

It localises to the cytoplasm. Calmodulin-binding scaffolding protein which is the center of the striatin-interacting phosphatase and kinase (STRIPAK) complexes. STRIPAK complexes have critical roles in protein (de)phosphorylation and are regulators of multiple signaling pathways including Hippo, MAPK, nuclear receptor and cytoskeleton remodeling. Different types of STRIPAK complexes are involved in a variety of biological processes such as cell growth, differentiation, apoptosis, metabolism and immune regulation. Key regulator of the expanded Hippo signaling pathway by interacting and allowing the inhibition of MAP4K kinases by the STRIPAK complex. This is Striatin-4 from Homo sapiens (Human).